Consider the following 893-residue polypeptide: DNA endonuclease RBBP8 (893 aa).

The segment at 22–45 is essential for binding to the MRN complex and for RPA focus formation on DNA damage; that stretch reads ELWTKLKEYHDKEVQGLQVKVTKL. Residues 35 to 84 adopt a coiled-coil conformation; the sequence is VQGLQVKVTKLKKERILDAQRLEEFFTKNQQLRDQQKVLQETIKILEDRL. The interval 45–160 is required for interaction with LMO4, probably by stabilizing the interaction through RPPB8 dimerization; the sequence is LKKERILDAQ…AELACEENII (116 aa). Glycyl lysine isopeptide (Lys-Gly) (interchain with G-Cter in SUMO2) cross-links involve residues lysine 62 and lysine 115. The stretch at 117–138 forms a coiled coil; the sequence is ITELMNEKNTLQEENKKLSEQL. A Glycyl lysine isopeptide (Lys-Gly) (interchain with G-Cter in SUMO2) cross-link involves residue lysine 193. Phosphoserine occurs at positions 233 and 276. Residues 296–307 show a composition bias toward basic and acidic residues; the sequence is MESARSKEDSLR. The disordered stretch occupies residues 296-324; the sequence is MESARSKEDSLRFSDSASKTPPQEFTTRA. A compositionally biased stretch (polar residues) spans 308-324; that stretch reads FSDSASKTPPQEFTTRA. The residue at position 315 (threonine 315) is a Phosphothreonine. Serine 325, serine 326, and serine 348 each carry phosphoserine. Residues lysine 359 and lysine 377 each participate in a glycyl lysine isopeptide (Lys-Gly) (interchain with G-Cter in SUMO2) cross-link. Serine 378 bears the Phosphoserine mark. Glycyl lysine isopeptide (Lys-Gly) (interchain with G-Cter in SUMO2) cross-links involve residues lysine 394, lysine 403, lysine 409, and lysine 437. Positions 489-493 match the PXDLS motif motif; sequence PLDLS. A damage-recruitment motif region spans residues 508 to 556; the sequence is NETSKNKLKQATIYEALKPIPKGSSSGRKALSGDCMPAKDSWETYCLQP. A Glycyl lysine isopeptide (Lys-Gly) (interchain with G-Cter in SUMO2); alternate cross-link involves residue lysine 525. Glycyl lysine isopeptide (Lys-Gly) (interchain with G-Cter in SUMO2) cross-links involve residues lysine 529, lysine 570, and lysine 576. Lysine 602 participates in a covalent cross-link: Glycyl lysine isopeptide (Lys-Gly) (interchain with G-Cter in SUMO2); alternate. Glycyl lysine isopeptide (Lys-Gly) (interchain with G-Cter in SUMO2) cross-links involve residues lysine 611, lysine 636, and lysine 638. A required for interaction with LMO4, probably by making physical contact with LMO4 region spans residues 639 to 683; it reads ALPSNQDTSFENIQWSVDPGADLSQYKMDVTVIDTKDSSHSRLGG. The residue at position 662 (serine 662) is a Phosphoserine; by ATM. Lysine 674 participates in a covalent cross-link: Glycyl lysine isopeptide (Lys-Gly) (interchain with G-Cter in SUMO2). Residue serine 677 is modified to Phosphoserine. Lysine 716 is covalently cross-linked (Glycyl lysine isopeptide (Lys-Gly) (interchain with G-Cter in SUMO2)). Residue serine 720 is modified to Phosphoserine. Phosphoserine; by ATM is present on serine 742. A Glycyl lysine isopeptide (Lys-Gly) (interchain with G-Cter in SUMO2) cross-link involves residue lysine 778. The KLHL15-binding signature appears at 836–838; the sequence is FRY. Phosphothreonine occurs at positions 843 and 855. Lysine 865 is covalently cross-linked (Glycyl lysine isopeptide (Lys-Gly) (interchain with G-Cter in SUMO2)). Residues 869–893 are disordered; the sequence is DLSPRPKRRQPYNAVFSPKGKEQRT.

This sequence belongs to the COM1/SAE2/CtIP family. Homotetramer; formed by antiparallel association of helical extensions protruding from the N-termini of two parallel coiled-coil dimers. Forms a dumbbell-shaped particle in which polar globular domains are held about 30 nm apart by a central rod. Homotetramerization is required for DNA-end resection and repair. Interacts (via the PXDLS motif) with CTBP1; the interaction is disrupted via binding of the adenovirus E1A to CTBP1. Component of the BRCA1-RBBP8 complex. Interacts (the Ser-326 phosphorylated form) with BRCA1 (via the C-terminal BRCT domains): the interaction occurs in the G2 phase, ubiquitinates RBBP8 and involves RBBP8 in BRCA1-dependent G2/M checkpoint control on DNA damage. Interacts with RB1. Interacts with the MRN complex. Interacts directly with MRE11; the interaction is required for efficient homologous recombination (HR) and regulation of the MRN complex. Interacts (when phosphorylated by CDK1) with NBN; promoting association with the MRN complex. Interacts with LMO4 (via the LIM zinc-binding 1 domain). Interacts with SIAH1. Interacts with RNF138. Interacts with EXD2. Interacts with CUL3 and KLHL15; this interaction leads to RBBP8 proteasomal degradation. Directly interacts with PIN1; this interaction depends upon RBBP8 phosphorylation, predominantly at Thr-315. Interacts with FZR1; this interaction leads to APC/C-mediated RBBP8 proteasomal degradation. Interacts with AUNIP; leading to recruit RBBP8 to sites of DNA damage. Interacts with SAMHD1. Interacts with HDGFL2. Hyperphosphorylation upon ionizing radiation results in dissociation from BRCA1. Phosphorylation at Thr-843 by CDK1 is essential for the recruitment to DNA and the DNA repair function. Phosphorylation at Thr-843 and Thr-855 promote interaction with NBN and recruitment to double-strand breaks (DSBs). Phosphorylated on Ser-326 as cells enter G2 phase. Phosphorylated at Ser-326 as cells enter G2 phase. This phosphorylation is required for binding BRCA1 and for the G2/M DNA damage transition checkpoint control. Phosphorylation at Thr-315 is required for PIN1-binding, while phosphorylation at Ser-276 serves as a PIN1 isomerization site. Phosphorylation at Thr-315 is cell-cycle dependent. It steadily increases during S phase, peaks at late S/G2 phase, and drops at G1. Phosphorylation is not required for tetramerization. Binds to DNA more strongly when dephosphorylated. In terms of processing, ubiquitinated. Ubiquitination at multiple sites by BRCA1 (via its N-terminal RING domain) does not lead to its proteasomal degradation but instead the ubiquitinated RBBP8 binds to chromatin following DNA damage and may play a role in G2/M checkpoint control. Ubiquitinated by RNF138 at its N-terminus. Ubiquitinated through 'Lys-48' by the E3 CUL3-KLHL15 complex; this modification leads to proteasomal degradation. Ubiquitinated by the E3 FZR1/APC/C complex; this modification leads to proteasomal degradation.

It localises to the nucleus. Its subcellular location is the chromosome. In terms of biological role, endonuclease that cooperates with the MRE11-RAD50-NBN (MRN) complex in DNA-end resection, the first step of double-strand break (DSB) repair through the homologous recombination (HR) pathway. HR is restricted to S and G2 phases of the cell cycle and preferentially repairs DSBs resulting from replication fork collapse. Key determinant of DSB repair pathway choice, as it commits cells to HR by preventing classical non-homologous end-joining (NHEJ). Specifically promotes the endonuclease activity of the MRN complex to clear DNA ends containing protein adducts: recruited to DSBs by NBN following phosphorylation by CDK1, and promotes the endonuclease activity of MRE11 to clear protein-DNA adducts and generate clean double-strand break ends. Functions downstream of the MRN complex and ATM, promotes ATR activation and its recruitment to DSBs in the S/G2 phase facilitating the generation of ssDNA. Component of the BRCA1-RBBP8 complex that regulates CHEK1 activation and controls cell cycle G2/M checkpoints on DNA damage. During immunoglobulin heavy chain class-switch recombination, promotes microhomology-mediated alternative end joining (A-NHEJ) and plays an essential role in chromosomal translocations. Binds preferentially to DNA Y-junctions and to DNA substrates with blocked ends and promotes intermolecular DNA bridging. This is DNA endonuclease RBBP8 (Rbbp8) from Mus musculus (Mouse).